The chain runs to 99 residues: MAKRPTETERCIESLIAIFQKHAGRDGNNTKISKTEFLIFMNTELAAFTQNQKDPGVLDRMMKKLDLDSDGQLDFQEFLNLIGGLAIACHDSFIKSTQK.

Met-1 is subject to N-acetylmethionine. A Phosphothreonine modification is found at Thr-8. EF-hand domains are found at residues 10–47 (RCIE…ELAA) and 53–88 (KDPG…LAIA). Asn-29, Lys-31, Glu-36, Asp-66, Asp-68, Asp-70, Gln-72, and Glu-77 together coordinate Ca(2+).

The protein belongs to the S-100 family. In terms of assembly, homodimer; disulfide-linked. Phosphorylation at Thr-8 significantly suppresses homodimerization and promotes association with NCL/nucleolin which induces nuclear translocation.

Its subcellular location is the cytoplasm. It is found in the nucleus. Facilitates the differentiation and the cornification of keratinocytes. This Sus scrofa (Pig) protein is Protein S100-A11 (S100A11).